The primary structure comprises 240 residues: L-isoleucine-4-hydroxylase (240 aa).

His-159, Asp-161, and His-212 together coordinate Fe cation.

This sequence belongs to the iron/ascorbate-dependent oxidoreductase family. L-ascorbate is required as a cofactor. It depends on Fe(2+) as a cofactor.

It catalyses the reaction L-isoleucine + 2-oxoglutarate + O2 = (4S)-4-hydroxy-L-isoleucine + succinate + CO2. Its function is as follows. Catalyzes the hydroxylation of L-isoleucine to produce (4S)-4-hydroxy-L-isoleucine. Can also catalyze the hydroxylation of L-leucine, L-norvaline, L-norleucine and L-allo-isoleucine, as well as the sulfoxidation of L-methionine, L-ethionine, S-methyl-L-cysteine, S-ethyl-L-cysteine, and S-allyl-L-cysteine. In Bacillus thuringiensis, this protein is L-isoleucine-4-hydroxylase.